Here is a 181-residue protein sequence, read N- to C-terminus: Small ribosomal subunit protein uS4 (181 aa).

The S4 RNA-binding domain maps to arginine 108–asparagine 177. Residues glycine 161–arginine 181 are disordered. Positions glycine 169–arginine 181 are enriched in basic and acidic residues.

This sequence belongs to the universal ribosomal protein uS4 family. As to quaternary structure, part of the 30S ribosomal subunit. Contacts protein S5. The interaction surface between S4 and S5 is involved in control of translational fidelity.

Functionally, one of the primary rRNA binding proteins, it binds directly to 16S rRNA where it nucleates assembly of the body of the 30S subunit. With S5 and S12 plays an important role in translational accuracy. In Methanosphaerula palustris (strain ATCC BAA-1556 / DSM 19958 / E1-9c), this protein is Small ribosomal subunit protein uS4.